A 379-amino-acid chain; its full sequence is Chaperone protein DnaJ (379 aa).

In terms of domain architecture, J spans aspartate 5–glycine 70. The segment at glycine 136–alanine 214 adopts a CR-type zinc-finger fold. Residues cysteine 149, cysteine 152, cysteine 166, cysteine 169, cysteine 188, cysteine 191, cysteine 202, and cysteine 205 each contribute to the Zn(2+) site. CXXCXGXG motif repeat units lie at residues cysteine 149–glycine 156, cysteine 166–glycine 173, cysteine 188–glycine 195, and cysteine 202–glycine 209.

It belongs to the DnaJ family. In terms of assembly, homodimer. Zn(2+) serves as cofactor.

It localises to the cytoplasm. Participates actively in the response to hyperosmotic and heat shock by preventing the aggregation of stress-denatured proteins and by disaggregating proteins, also in an autonomous, DnaK-independent fashion. Unfolded proteins bind initially to DnaJ; upon interaction with the DnaJ-bound protein, DnaK hydrolyzes its bound ATP, resulting in the formation of a stable complex. GrpE releases ADP from DnaK; ATP binding to DnaK triggers the release of the substrate protein, thus completing the reaction cycle. Several rounds of ATP-dependent interactions between DnaJ, DnaK and GrpE are required for fully efficient folding. Also involved, together with DnaK and GrpE, in the DNA replication of plasmids through activation of initiation proteins. This is Chaperone protein DnaJ from Mannheimia haemolytica (Pasteurella haemolytica).